We begin with the raw amino-acid sequence, 316 residues long: Ribosomal RNA small subunit methyltransferase H (316 aa).

S-adenosyl-L-methionine is bound by residues 35–37, aspartate 55, phenylalanine 79, aspartate 101, and glutamine 108; that span reads GGH.

It belongs to the methyltransferase superfamily. RsmH family.

It is found in the cytoplasm. It catalyses the reaction cytidine(1402) in 16S rRNA + S-adenosyl-L-methionine = N(4)-methylcytidine(1402) in 16S rRNA + S-adenosyl-L-homocysteine + H(+). In terms of biological role, specifically methylates the N4 position of cytidine in position 1402 (C1402) of 16S rRNA. This Aliivibrio fischeri (strain MJ11) (Vibrio fischeri) protein is Ribosomal RNA small subunit methyltransferase H.